The primary structure comprises 939 residues: Dynamin-like GTPase MGM1, mitochondrial (939 aa).

The N-terminal 27 residues, 1-27 (MSAQLRAAAAITPAARRVISGPAAVRR), are a transit peptide targeting the mitochondrion. The helical transmembrane segment at 85-103 (FIRVPALFGGMMLGAVGWV) threads the bilayer. The span at 170 to 183 (AGEGSGSGEGGPNG) shows a compositional bias: gly residues. The tract at residues 170–196 (AGEGSGSGEGGPNGGPEPPRQSRAGAA) is disordered. The Dynamin-type G domain maps to 249 to 522 (TVTLPSIVVI…LEQQMSSKLN (274 aa)). Positions 259–266 (GSQSSGKS) are G1 motif. Positions 262, 264, 265, 266, 267, and 281 each coordinate GTP. Position 266 (Ser266) interacts with Mg(2+). Residues 285–287 (ITR) form a G2 motif region. Residues Thr286 and Asp359 each coordinate Mg(2+). A G3 motif region spans residues 359-362 (DLPG). The tract at residues 427-430 (TKMD) is G4 motif. GTP contacts are provided by Lys428, Asp430, and Ser457. The interval 456–459 (ISKL) is G5 motif. Positions 549 to 703 (SAESYLAASL…TSDGIEISLK (155 aa)) are stalk region. The interval 710–809 (DIQPNEWAQG…LSLRIQAAKS (100 aa)) is paddle region. The stalk region stretch occupies residues 810–877 (RQCKTLTNKY…GGGLEKFARE (68 aa)). Cysteines 812 and 821 form a disulfide. One can recognise a GED domain in the interval 815–909 (LTNKYYCPEV…KIEELHRISS (95 aa)).

The protein belongs to the TRAFAC class dynamin-like GTPase superfamily. Dynamin/Fzo/YdjA family. Oligomeric complex consisting of membrane-bound and soluble forms of MGM1. Post-translationally, cleavage of the transit peptide by mitochondrial processing protease (MPP) produces a long integral membrane form of MGM1 (L-MGM1). Further processing by the rhomboid protease PCP1 produces a short peripheral membrane form of MGM1 (S-MGM1). Both forms are required for full activity.

The protein localises to the mitochondrion inner membrane. Its subcellular location is the mitochondrion intermembrane space. It catalyses the reaction GTP + H2O = GDP + phosphate + H(+). Its function is as follows. Dynamin-related GTPase that is essential for normal mitochondrial morphology by mediating fusion of the mitochondrial inner membranes, regulating cristae morphology and maintaining respiratory chain function. Exists in two forms: the transmembrane, long form (Dynamin-like GTPase MGM1, long form; L-MGM1), which is tethered to the inner mitochondrial membrane, and the short soluble form (Dynamin-like GTPase MGM1, short form; S-MGM1), which results from proteolytic cleavage and localizes in the intermembrane space. Both forms (L-MGM1 and S-MGM1) cooperate to catalyze the fusion of the mitochondrial inner membrane. The equilibrium between L-MGM1 and S-MGM1 is essential: excess levels of S-MGM1, following loss of mitochondrial membrane potential, lead to an impaired equilibrium between L-MGM1 and S-MGM1, inhibiting mitochondrial fusion. Plays a role in the maintenance and remodeling of mitochondrial cristae, some invaginations of the mitochondrial inner membrane that provide an increase in the surface area. Probably acts by forming helical filaments at the inside of inner membrane tubes with the shape and dimensions of crista junctions. In terms of biological role, constitutes the transmembrane long form (L-MGM1) that plays a central role in mitochondrial inner membrane fusion and cristae morphology. L-MGM1 and the soluble short form (S-MGM1) form higher-order helical assemblies that coordinate the fusion of mitochondrial inner membranes. Inner membrane-anchored L-MGM1 molecules initiate membrane remodeling by recruiting soluble S-MGM1 to rapidly polymerize into a flexible cylindrical scaffold encaging the mitochondrial inner membrane. Once at the membrane surface, the formation of S-MGM1 helices induce bilayer curvature. MGM1 dimerization through the paddle region, which inserts into cardiolipin-containing membrane, promotes GTP hydrolysis and the helical assembly of a flexible MGM1 lattice on the membrane, which drives membrane curvature and mitochondrial fusion. Constitutes the soluble short form (S-MGM1) generated by cleavage by PCP1, which plays a central role in mitochondrial inner membrane fusion and cristae morphology. The transmembrane long form (L-MGM1) and the S-MGM1 form higher-order helical assemblies that coordinate the fusion of mitochondrial inner membranes. Inner membrane-anchored L-MGM1 molecules initiate membrane remodeling by recruiting soluble S-MGM1 to rapidly polymerize into a flexible cylindrical scaffold encaging the mitochondrial inner membrane. Once at the membrane surface, the formation of S-MGM1 helices induce bilayer curvature. MGM1 dimerization through the paddle region, which inserts into cardiolipin-containing membrane, promotes GTP hydrolysis and the helical assembly of a flexible MGM1 lattice on the membrane, which drives membrane curvature and mitochondrial fusion. Excess levels of S-MGM1 produced by cleavage by PCP1 following stress conditions that induce loss of mitochondrial membrane potential, lead to an impaired equilibrium between L-MGM1 and S-MGM1, thereby inhibiting mitochondrial fusion. The sequence is that of Dynamin-like GTPase MGM1, mitochondrial from Chaetomium thermophilum (strain DSM 1495 / CBS 144.50 / IMI 039719) (Thermochaetoides thermophila).